Reading from the N-terminus, the 1033-residue chain is MSGSFWKFGQDYSIESPVSKILNSAFIKINKDQDDDVPTGTCEENIADDEDNSSHDYAASEDNVVNENEEKEEENTLPTTESEYENYRPNLDVLDDLLDDDELYTELMCSNFKLLIFLKYPEVLSKLIEYVTNEKILDEETDSAKKPEIIEGVNDHPILIERDRKDKKEDAEEGGDSEETTNDSDHDSGDERSVDSEETSITLPPESEEQVETRRARIAAEILSADVWPISAAIMQNKDLLGRLWSILDHPAPLPIPASTYFMKINERLLDMDITGMLEFILSRDSLVARFLTHVDNPSLMDFLLKVISTDKPDSPTGVIKILKSQELIPKLLDHLNPEYGISTQSAAGDFIKAFVTLSTNSSNELASGIGPNELTRQLVSEEMIEKLIKIMLKGGTSLSNGVGIIIELIRKNNSDYDFIQLVYTTLESHPPTDRDPIHLIHLVKLFAKHMPDFADMLDKTKLPLMEMPFGNIEPLGFERFKICELIAELLHCSNMTLLNEPNGEMIAQERDIERAKELETSTEKENITAIVDNKSSYYDKDCVEKDITENLGALQINNQGSEEDELNDTGVSSVKLDVKSDAKVVEGLENDASGVELYDETLSDTESVRECLREKPLVGDRLKIALEDTKILISILDMFTEFPWNNFLHNVIFDIAQQIFNGPLKTGYNRFLLKDYLVDAYLTKKIVDADKACQDYEKKTGLRHGYMGHLTLVAEEISKFKEYIDEMKLTFCNTAVSDRFEEPFWKEYSETILADTREKYNTVLGDFGNDQESDDDVIRNSDSEDIIGDTEGNENYGNGENDELLSNGHDSGNMDLYYNFNNNENEENEEDYAEYSDVDNKNYYNNVETNDDDYDSDDGKSKSAESEFTDKISEHRDGNSLYNEDNDENGSDKWTSGTSLFPPDHFPSRSQPSDPKLQDQNIFHHQFDFEGVGDDDDYMDPNDDGQSYARPGNPLYTTPKTPPRPKTILFNSLSALDNNGEDEEVALGTSVDDRMDNEISSDEEDSEDEDEENDMGNEEGYSLYRSRSKEAF.

4 disordered regions span residues Asp-32 to Ser-82, Pro-147 to Thr-213, Phe-768 to Gly-813, and Glu-828 to Phe-1033. The segment covering Ile-158 to Asp-170 has biased composition (basic and acidic residues). Residues Ala-171–Asn-182 are compositionally biased toward acidic residues. Residues Asp-183–Asp-195 are compositionally biased toward basic and acidic residues. Residue Ser-774 is modified to Phosphoserine. 2 stretches are compositionally biased toward acidic residues: residues Ser-784–Gly-793 and Glu-828–Asp-838. Phosphoserine occurs at positions 857, 862, and 892. Positions Asp-858–Gly-879 are enriched in basic and acidic residues. Over residues Ser-909–Phe-924 the composition is skewed to polar residues. Positions Gly-932–Asp-944 are enriched in acidic residues. Thr-990 is subject to Phosphothreonine. The residue at position 991 (Ser-991) is a Phosphoserine. Positions Ile-1000 to Asn-1018 are enriched in acidic residues.

This sequence belongs to the SAPS family. Associates with the SIT4 protein phosphatase catalytic subunit in a cell-cycle-dependent manner. Post-translationally, hyperphosphorylated in the absence of SIT4.

The protein resides in the cytoplasm. Its function is as follows. Positive regulator of protein phosphatase SIT4. Involved in the general amino acid control (GAAC) response regulated by TOR. Involved in the dephosphorylation of the elongator complex subunit IKI3. The polypeptide is SIT4-associating protein SAP190 (SAP190) (Saccharomyces cerevisiae (strain Lalvin EC1118 / Prise de mousse) (Baker's yeast)).